The chain runs to 218 residues: DNA-directed RNA polymerase III subunit RPC7-like (218 aa).

The interval 130–218 (TIILPKRPPK…SDDNMDEAIY (89 aa)) is disordered. Basic and acidic residues predominate over residues 139-160 (KSTDDKEETIQKLETLEKKEEE). Composition is skewed to acidic residues over residues 161-193 (VTSEEDEEKEEEEEKEEGEEEEYDEEEHEEETD) and 201-218 (NGEDFGGDSDDNMDEAIY).

It belongs to the eukaryotic RPC7 RNA polymerase subunit family. Component of the RNA polymerase III (Pol III) complex consisting of 17 subunits. Pol III exists as two alternative complexes defined by the mutually exclusive incorporation of subunit POLR3G/RPC7alpha or POLR3GL/RPC7beta. Found in a trimeric complex with POLR3C/RPC3 and POLR3F/RPC6. Directly interacts with POLR3C. Expressed in the liver.

Its subcellular location is the nucleus. Functionally, DNA-dependent RNA polymerase catalyzes the transcription of DNA into RNA using the four ribonucleoside triphosphates as substrates. Specific peripheric component of RNA polymerase III which synthesizes small RNAs, such as 5S rRNA and tRNAs. The chain is DNA-directed RNA polymerase III subunit RPC7-like from Mus musculus (Mouse).